The sequence spans 331 residues: tRNA pseudouridine synthase B (331 aa).

The Nucleophile role is filled by Asp-51.

The protein belongs to the pseudouridine synthase TruB family. Type 1 subfamily.

It carries out the reaction uridine(55) in tRNA = pseudouridine(55) in tRNA. Responsible for synthesis of pseudouridine from uracil-55 in the psi GC loop of transfer RNAs. The protein is tRNA pseudouridine synthase B of Verminephrobacter eiseniae (strain EF01-2).